The chain runs to 173 residues: uncharacterized protein (173 aa).

Positions 1-23 (ELTSVAGSGRVDSTPLGSRGVTD) are disordered.

Component of the acid-insoluble and acid-soluble organic matrix of calcified layers of the shell (at protein level).

The protein resides in the secreted. This is an uncharacterized protein from Lottia gigantea (Giant owl limpet).